We begin with the raw amino-acid sequence, 224 residues long: Cytidylate kinase (224 aa).

11–19 is a binding site for ATP; sequence GPAAAGKST.

Belongs to the cytidylate kinase family. Type 1 subfamily.

The protein localises to the cytoplasm. The catalysed reaction is CMP + ATP = CDP + ADP. The enzyme catalyses dCMP + ATP = dCDP + ADP. This Bacillus subtilis (strain 168) protein is Cytidylate kinase (cmk).